The following is a 356-amino-acid chain: Glucan endo-1,3-beta-glucosidase, acidic isoform GL153 (356 aa).

The N-terminal stretch at 1 to 29 is a signal peptide; sequence MALCIKNGFLAAALVLVGLLMCSIQMIGA. A Pyrrolidone carboxylic acid modification is found at Gln30. Residue Asn95 is glycosylated (N-linked (GlcNAc...) asparagine). Glu124 serves as the catalytic Proton donor. Glu264 (nucleophile) is an active-site residue.

It belongs to the glycosyl hydrolase 17 family. Is expressed primarily in epidermal cell of healthy plant, and following induction by ethylene, accumulates in mesophyll cells.

Its subcellular location is the secreted. The protein localises to the extracellular space. It catalyses the reaction Hydrolysis of (1-&gt;3)-beta-D-glucosidic linkages in (1-&gt;3)-beta-D-glucans.. Functionally, is thought to be an important plant defense-related product against fungal pathogens. This Nicotiana tabacum (Common tobacco) protein is Glucan endo-1,3-beta-glucosidase, acidic isoform GL153 (GGL4).